The following is a 130-amino-acid chain: MIGEWNNGTGRRKSSVARVFLKKGSGQIVVNGKAIEKFFGRATSIMICKQPLLLTNHAETFDIMVNVAGGGESGQAGAVRHGITRALIDYDATLKPELSKAGFVTRDAREVERKKVGFHGARRRKQFSKR.

The protein belongs to the universal ribosomal protein uS9 family.

In Albidiferax ferrireducens (strain ATCC BAA-621 / DSM 15236 / T118) (Rhodoferax ferrireducens), this protein is Small ribosomal subunit protein uS9.